The primary structure comprises 251 residues: Cell division protein ZapD (251 aa).

It belongs to the ZapD family. Interacts with FtsZ.

Its subcellular location is the cytoplasm. In terms of biological role, cell division factor that enhances FtsZ-ring assembly. Directly interacts with FtsZ and promotes bundling of FtsZ protofilaments, with a reduction in FtsZ GTPase activity. In Paraburkholderia phymatum (strain DSM 17167 / CIP 108236 / LMG 21445 / STM815) (Burkholderia phymatum), this protein is Cell division protein ZapD.